We begin with the raw amino-acid sequence, 296 residues long: Urease accessory protein UreD (296 aa).

Belongs to the UreD family. UreD, UreF and UreG form a complex that acts as a GTP-hydrolysis-dependent molecular chaperone, activating the urease apoprotein by helping to assemble the nickel containing metallocenter of UreC. The UreE protein probably delivers the nickel.

It localises to the cytoplasm. Its function is as follows. Required for maturation of urease via the functional incorporation of the urease nickel metallocenter. The protein is Urease accessory protein UreD of Nitrosococcus oceani (strain ATCC 19707 / BCRC 17464 / JCM 30415 / NCIMB 11848 / C-107).